A 393-amino-acid chain; its full sequence is Major outer membrane porin, serovar D (393 aa).

A signal peptide spans 1–22 (MKKLLKSVLVFAALSSASSLQA).

Belongs to the chlamydial porin (CP) (TC 1.B.2) family. As to quaternary structure, part of a disulfide cross-linked outer membrane complex (COMC) composed of the major outer membrane porin (MOMP), the small cysteine-rich protein (OmcA) and the large cysteine-rich periplasmic protein (OmcB).

The protein resides in the cell outer membrane. In elementary bodies (EBs, the infectious stage, which is able to survive outside the host cell) provides the structural integrity of the outer envelope through disulfide cross-links with the small cysteine-rich protein and the large cysteine-rich periplasmic protein. It has been described in publications as the Sarkosyl-insoluble COMC (Chlamydia outer membrane complex), and serves as the functional equivalent of peptidoglycan. Its function is as follows. Permits diffusion of specific solutes through the outer membrane. The sequence is that of Major outer membrane porin, serovar D (ompA) from Chlamydia trachomatis serovar D (strain ATCC VR-885 / DSM 19411 / UW-3/Cx).